We begin with the raw amino-acid sequence, 223 residues long: Deoxyribose-phosphate aldolase (223 aa).

The Proton donor/acceptor role is filled by Asp91. The active-site Schiff-base intermediate with acetaldehyde is Lys153. Residue Lys182 is the Proton donor/acceptor of the active site.

The protein belongs to the DeoC/FbaB aldolase family. DeoC type 1 subfamily.

The protein resides in the cytoplasm. The catalysed reaction is 2-deoxy-D-ribose 5-phosphate = D-glyceraldehyde 3-phosphate + acetaldehyde. It functions in the pathway carbohydrate degradation; 2-deoxy-D-ribose 1-phosphate degradation; D-glyceraldehyde 3-phosphate and acetaldehyde from 2-deoxy-alpha-D-ribose 1-phosphate: step 2/2. In terms of biological role, catalyzes a reversible aldol reaction between acetaldehyde and D-glyceraldehyde 3-phosphate to generate 2-deoxy-D-ribose 5-phosphate. This is Deoxyribose-phosphate aldolase from Streptococcus pyogenes serotype M28 (strain MGAS6180).